A 364-amino-acid chain; its full sequence is Methylthioribose-1-phosphate isomerase (364 aa).

The active-site Proton donor is the aspartate 246.

Belongs to the eIF-2B alpha/beta/delta subunits family. MtnA subfamily.

It localises to the cytoplasm. It is found in the nucleus. The enzyme catalyses 5-(methylsulfanyl)-alpha-D-ribose 1-phosphate = 5-(methylsulfanyl)-D-ribulose 1-phosphate. Its pathway is amino-acid biosynthesis; L-methionine biosynthesis via salvage pathway; L-methionine from S-methyl-5-thio-alpha-D-ribose 1-phosphate: step 1/6. Catalyzes the interconversion of methylthioribose-1-phosphate (MTR-1-P) into methylthioribulose-1-phosphate (MTRu-1-P). This Bombyx mori (Silk moth) protein is Methylthioribose-1-phosphate isomerase.